Reading from the N-terminus, the 238-residue chain is Ribitol-5-phosphate cytidylyltransferase (238 aa).

Residues 7-10 (LAGG) and 81-87 (GDDRNHS) contribute to the CTP site.

This sequence belongs to the IspD/TarI cytidylyltransferase family. TarI subfamily.

The catalysed reaction is D-ribitol 5-phosphate + CTP + H(+) = CDP-L-ribitol + diphosphate. It participates in cell wall biogenesis; poly(ribitol phosphate) teichoic acid biosynthesis. In terms of biological role, catalyzes the transfer of the cytidylyl group of CTP to D-ribitol 5-phosphate. In Staphylococcus epidermidis (strain ATCC 12228 / FDA PCI 1200), this protein is Ribitol-5-phosphate cytidylyltransferase.